The following is a 655-amino-acid chain: Putative calcium up-regulated protein J (655 aa).

One can recognise a Ricin B-type lectin domain in the interval 40-181 (KSRAMLKGDN…DNVCFQWDLE (142 aa)).

It belongs to the cup family.

This chain is Putative calcium up-regulated protein J (cupJ), found in Dictyostelium discoideum (Social amoeba).